The chain runs to 296 residues: Putative mannose 6-phosphate receptor-like protein C530.09c (296 aa).

Residues 1–25 form the signal peptide; sequence MRLLTCLINVLAGLTLFSQFQRAFG. The Lumenal segment spans residues 26–206; it reads LTITRRGFKV…TVKKDSTLNP (181 aa). Residues 42 to 197 enclose the MRH domain; that stretch reads PFCALHHPNT…EWKTIHACPT (156 aa). Cysteines 44 and 87 form a disulfide. N-linked (GlcNAc...) asparagine glycosylation is found at Asn-64, Asn-81, Asn-93, Asn-96, and Asn-143. Disulfide bonds link Cys-147–Cys-183 and Cys-163–Cys-195. A helical transmembrane segment spans residues 207 to 227; the sequence is VSVFLLFCAIAFLAYFVGGFV. Residues 228–249 lie on the Cytoplasmic side of the membrane; the sequence is YQRVVLNARGLRQIPNYEMWRS. A helical membrane pass occupies residues 250–270; it reads LFGFISDIVIILYSSILSILP. Residues 271-296 lie on the Lumenal side of the membrane; sequence SSITRMRGNRRNIDYVEDALIDDIDT.

It belongs to the MRL1/IGF2R family.

The protein localises to the golgi apparatus. It localises to the trans-Golgi network membrane. The protein resides in the endosome membrane. This is Putative mannose 6-phosphate receptor-like protein C530.09c from Schizosaccharomyces pombe (strain 972 / ATCC 24843) (Fission yeast).